Reading from the N-terminus, the 465-residue chain is MDDFPSLNVSDLESKLLDYNIRDYEVQNSKHKNNIAGNEKESIDQLSLLNQVCSLKNRKAIDSTKNSPLFYQNVLLSKLACSKILCHATKGGNIEVMGMLLGNVIGNTFVIFDCFELPVEGTETMVNAHMESYEYMVQFYHEMVERSYTRNEENLNIIGWYHSHPGYDCWLSNIDMQTQSLNQQHQDPYLAIVVDPHKSKNDQKVRIGSFRTYQDQNDDTNFYELNTTVFDSELNKLENPLSVKIPFNSIESRNLESNYLQKLSETVKQWRNFKIMEKIENTAHTEDTTTNKSISTPGRIIQTAHEFAFAATSNGNGSRVNIMRSNSVSSIGSSSDIEMEDRNCSAFDSVASSINTIADPSRTSSIHTQMNNQNNQQERNSPKRPHILPAIQSSRYGVIFEGKDRPENKNFNIRTASAQDAFESKCIDDFHESLKNDYLTQKEILLRLKLRQYYRLRMYRDMFSK.

In terms of domain architecture, MPN spans 74–216 (VLLSKLACSK…IGSFRTYQDQ (143 aa)). His-162, His-164, and Asp-175 together coordinate Zn(2+). The short motif at 162–175 (HSHPGYDCWLSNID) is the JAMM motif element. Residues 364–386 (SSIHTQMNNQNNQQERNSPKRPH) are disordered.

This sequence belongs to the peptidase M67A family. CSN5 subfamily. As to quaternary structure, component of the COP9 signalosome (CSN) complex.

Its subcellular location is the cytoplasm. The protein localises to the nucleus. Its function is as follows. Catalytic Component of the COP9 signalosome (CSN) complex that acts as an regulator of the ubiquitin (Ubl) conjugation pathway by mediating the deneddylation of the cullin subunit of SCF-type E3 ubiquitin-protein ligase complexes. The sequence is that of COP9 signalosome complex subunit 5 (RRI1) from Candida glabrata (strain ATCC 2001 / BCRC 20586 / JCM 3761 / NBRC 0622 / NRRL Y-65 / CBS 138) (Yeast).